Reading from the N-terminus, the 278-residue chain is MTNQAPIPVIVNGAAGKMGREVVKAVAQAPDLNLLGAIDSSPEHQGKDAGELAGLSEPLEVPITNQLEPMLGYVAGERQGPPGVIVDFTHPDSVYDNVRSAIAYGIRPVVGTTGLSPAQIQNLADFAEKASTGCLIIPNFSIGMVLLQQAAVTASQYFDHVEIIELHHNQKADAPSGTAIQTAELLAELGKTFNSAIVEETEKIPGARGSLAEEGIRIHSVRLPGLIAHQEVIFGAPGQIYTLRHDTSDRACYMPGVLLAIRKVLQLKSLVYGLEKIL.

NAD(+) contacts are provided by residues 13–18 and 111–113; these read GAAGKM and GTT. Residue H167 is the Proton donor/acceptor of the active site. H168 serves as a coordination point for (S)-2,3,4,5-tetrahydrodipicolinate. The Proton donor role is filled by K171. A (S)-2,3,4,5-tetrahydrodipicolinate-binding site is contributed by 177 to 178; it reads GT.

Belongs to the DapB family.

The protein localises to the cytoplasm. The enzyme catalyses (S)-2,3,4,5-tetrahydrodipicolinate + NAD(+) + H2O = (2S,4S)-4-hydroxy-2,3,4,5-tetrahydrodipicolinate + NADH + H(+). It carries out the reaction (S)-2,3,4,5-tetrahydrodipicolinate + NADP(+) + H2O = (2S,4S)-4-hydroxy-2,3,4,5-tetrahydrodipicolinate + NADPH + H(+). The protein operates within amino-acid biosynthesis; L-lysine biosynthesis via DAP pathway; (S)-tetrahydrodipicolinate from L-aspartate: step 4/4. Catalyzes the conversion of 4-hydroxy-tetrahydrodipicolinate (HTPA) to tetrahydrodipicolinate. The protein is 4-hydroxy-tetrahydrodipicolinate reductase of Nostoc sp. (strain PCC 7120 / SAG 25.82 / UTEX 2576).